The primary structure comprises 427 residues: Adenylosuccinate synthetase (427 aa).

GTP-binding positions include 12–18 (GDEGKGK) and 40–42 (GHT). D13 (proton acceptor) is an active-site residue. The Mg(2+) site is built by D13 and G40. IMP is bound by residues 13–16 (DEGK), 38–41 (NAGH), T130, R144, Q224, T239, and R303. H41 serves as the catalytic Proton donor. 299–305 (SVTGRPR) serves as a coordination point for substrate. GTP-binding positions include R305, 331–333 (KLD), and 411–413 (SVG).

Belongs to the adenylosuccinate synthetase family. As to quaternary structure, homodimer. Mg(2+) is required as a cofactor.

It is found in the cytoplasm. The catalysed reaction is IMP + L-aspartate + GTP = N(6)-(1,2-dicarboxyethyl)-AMP + GDP + phosphate + 2 H(+). It participates in purine metabolism; AMP biosynthesis via de novo pathway; AMP from IMP: step 1/2. Its function is as follows. Plays an important role in the de novo pathway of purine nucleotide biosynthesis. Catalyzes the first committed step in the biosynthesis of AMP from IMP. In Sorangium cellulosum (strain So ce56) (Polyangium cellulosum (strain So ce56)), this protein is Adenylosuccinate synthetase.